The sequence spans 74 residues: Exodeoxyribonuclease 7 small subunit (74 aa).

Belongs to the XseB family. Heterooligomer composed of large and small subunits.

The protein resides in the cytoplasm. It catalyses the reaction Exonucleolytic cleavage in either 5'- to 3'- or 3'- to 5'-direction to yield nucleoside 5'-phosphates.. In terms of biological role, bidirectionally degrades single-stranded DNA into large acid-insoluble oligonucleotides, which are then degraded further into small acid-soluble oligonucleotides. The protein is Exodeoxyribonuclease 7 small subunit of Glaesserella parasuis serovar 5 (strain SH0165) (Haemophilus parasuis).